A 239-amino-acid chain; its full sequence is Sugar fermentation stimulation protein homolog (239 aa).

The protein belongs to the SfsA family.

In Methanobrevibacter smithii (strain ATCC 35061 / DSM 861 / OCM 144 / PS), this protein is Sugar fermentation stimulation protein homolog.